Consider the following 354-residue polypeptide: Uroporphyrinogen decarboxylase (354 aa).

Substrate contacts are provided by residues 27–31 (RQAGR), phenylalanine 46, aspartate 77, tyrosine 154, threonine 209, and histidine 327.

It belongs to the uroporphyrinogen decarboxylase family. Homodimer.

It is found in the cytoplasm. The catalysed reaction is uroporphyrinogen III + 4 H(+) = coproporphyrinogen III + 4 CO2. Its pathway is porphyrin-containing compound metabolism; protoporphyrin-IX biosynthesis; coproporphyrinogen-III from 5-aminolevulinate: step 4/4. Functionally, catalyzes the decarboxylation of four acetate groups of uroporphyrinogen-III to yield coproporphyrinogen-III. The polypeptide is Uroporphyrinogen decarboxylase (Salmonella typhi).